Here is a 502-residue protein sequence, read N- to C-terminus: Probable glycine dehydrogenase (decarboxylating) subunit 2 (502 aa).

Lys273 carries the N6-(pyridoxal phosphate)lysine modification.

This sequence belongs to the GcvP family. C-terminal subunit subfamily. As to quaternary structure, the glycine cleavage system is composed of four proteins: P, T, L and H. In this organism, the P 'protein' is a heterodimer of two subunits. Requires pyridoxal 5'-phosphate as cofactor.

The catalysed reaction is N(6)-[(R)-lipoyl]-L-lysyl-[glycine-cleavage complex H protein] + glycine + H(+) = N(6)-[(R)-S(8)-aminomethyldihydrolipoyl]-L-lysyl-[glycine-cleavage complex H protein] + CO2. Its function is as follows. The glycine cleavage system catalyzes the degradation of glycine. The P protein binds the alpha-amino group of glycine through its pyridoxal phosphate cofactor; CO(2) is released and the remaining methylamine moiety is then transferred to the lipoamide cofactor of the H protein. This is Probable glycine dehydrogenase (decarboxylating) subunit 2 from Pyrococcus furiosus (strain ATCC 43587 / DSM 3638 / JCM 8422 / Vc1).